The chain runs to 227 residues: Cytochrome c oxidase subunit 2 (227 aa).

Residues 1-14 lie on the Mitochondrial intermembrane side of the membrane; the sequence is MAYPYELGFQDASS. Residues 15 to 45 form a helical membrane-spanning segment; the sequence is PIMEELLHFHDHTLMIVFLISTLVLYLITIM. Residues 46 to 59 are Mitochondrial matrix-facing; it reads LTTKLTHTSTMDAQ. A helical transmembrane segment spans residues 60-87; the sequence is EIETIWTILPAIILILIALPSLRILYMM. Residues 88 to 227 are Mitochondrial intermembrane-facing; it reads DEINSPSLTV…DFEIWSSSML (140 aa). 6 residues coordinate Cu cation: histidine 161, cysteine 196, glutamate 198, cysteine 200, histidine 204, and methionine 207. Glutamate 198 contributes to the Mg(2+) binding site.

This sequence belongs to the cytochrome c oxidase subunit 2 family. Component of the cytochrome c oxidase (complex IV, CIV), a multisubunit enzyme composed of 14 subunits. The complex is composed of a catalytic core of 3 subunits MT-CO1, MT-CO2 and MT-CO3, encoded in the mitochondrial DNA, and 11 supernumerary subunits COX4I, COX5A, COX5B, COX6A, COX6B, COX6C, COX7A, COX7B, COX7C, COX8 and NDUFA4, which are encoded in the nuclear genome. The complex exists as a monomer or a dimer and forms supercomplexes (SCs) in the inner mitochondrial membrane with NADH-ubiquinone oxidoreductase (complex I, CI) and ubiquinol-cytochrome c oxidoreductase (cytochrome b-c1 complex, complex III, CIII), resulting in different assemblies (supercomplex SCI(1)III(2)IV(1) and megacomplex MCI(2)III(2)IV(2)). Found in a complex with TMEM177, COA6, COX18, COX20, SCO1 and SCO2. Interacts with TMEM177 in a COX20-dependent manner. Interacts with COX20. Interacts with COX16. The cofactor is Cu cation.

Its subcellular location is the mitochondrion inner membrane. The enzyme catalyses 4 Fe(II)-[cytochrome c] + O2 + 8 H(+)(in) = 4 Fe(III)-[cytochrome c] + 2 H2O + 4 H(+)(out). Functionally, component of the cytochrome c oxidase, the last enzyme in the mitochondrial electron transport chain which drives oxidative phosphorylation. The respiratory chain contains 3 multisubunit complexes succinate dehydrogenase (complex II, CII), ubiquinol-cytochrome c oxidoreductase (cytochrome b-c1 complex, complex III, CIII) and cytochrome c oxidase (complex IV, CIV), that cooperate to transfer electrons derived from NADH and succinate to molecular oxygen, creating an electrochemical gradient over the inner membrane that drives transmembrane transport and the ATP synthase. Cytochrome c oxidase is the component of the respiratory chain that catalyzes the reduction of oxygen to water. Electrons originating from reduced cytochrome c in the intermembrane space (IMS) are transferred via the dinuclear copper A center (CU(A)) of subunit 2 and heme A of subunit 1 to the active site in subunit 1, a binuclear center (BNC) formed by heme A3 and copper B (CU(B)). The BNC reduces molecular oxygen to 2 water molecules using 4 electrons from cytochrome c in the IMS and 4 protons from the mitochondrial matrix. The protein is Cytochrome c oxidase subunit 2 (MT-CO2) of Cavia aperea (Brazilian guinea pig).